Consider the following 460-residue polypeptide: UDP-N-acetylmuramoylalanine--D-glutamate ligase (460 aa).

120–126 lines the ATP pocket; that stretch reads GSNGKTT.

This sequence belongs to the MurCDEF family.

Its subcellular location is the cytoplasm. The enzyme catalyses UDP-N-acetyl-alpha-D-muramoyl-L-alanine + D-glutamate + ATP = UDP-N-acetyl-alpha-D-muramoyl-L-alanyl-D-glutamate + ADP + phosphate + H(+). The protein operates within cell wall biogenesis; peptidoglycan biosynthesis. Its function is as follows. Cell wall formation. Catalyzes the addition of glutamate to the nucleotide precursor UDP-N-acetylmuramoyl-L-alanine (UMA). The sequence is that of UDP-N-acetylmuramoylalanine--D-glutamate ligase from Lactobacillus delbrueckii subsp. bulgaricus (strain ATCC 11842 / DSM 20081 / BCRC 10696 / JCM 1002 / NBRC 13953 / NCIMB 11778 / NCTC 12712 / WDCM 00102 / Lb 14).